Reading from the N-terminus, the 290-residue chain is Fructokinase (290 aa).

T130 contributes to the ATP binding site. Residues H153, C169, H172, and C175 each coordinate Zn(2+). ATP-binding positions include P183 and 231–235 (GVMEK).

Belongs to the ROK (NagC/XylR) family. As to quaternary structure, homodimer. It depends on Mg(2+) as a cofactor.

It catalyses the reaction D-fructose + ATP = D-fructose 6-phosphate + ADP + H(+). Inactivated by EDTA. Inhibition by zinc ions (Potential). This Lactococcus lactis subsp. cremoris (Streptococcus cremoris) protein is Fructokinase (scrK).